We begin with the raw amino-acid sequence, 56 residues long: Large ribosomal subunit protein bL32c (56 aa).

This sequence belongs to the bacterial ribosomal protein bL32 family.

It localises to the plastid. The protein resides in the chloroplast. This is Large ribosomal subunit protein bL32c from Platanus occidentalis (Sycamore).